Consider the following 980-residue polypeptide: BEM1-interacting protein 1 (980 aa).

Residues 13–77 (KSFPLYIAVN…PAVFTKRIAI (65 aa)) enclose the SH3 domain. 3 positions are modified to phosphoserine: Ser104, Ser106, and Ser128. Positions 139–163 (SGSVEQEVSKSPTRVPEVSTPQLQD) are disordered. Over residues 141–150 (SVEQEVSKSP) the composition is skewed to polar residues. Phosphothreonine occurs at positions 151 and 158. A Phosphoserine modification is found at Ser209. The SAM domain maps to 228 to 292 (WSPEEVTDYF…FKEIRNIKSA (65 aa)). Disordered regions lie at residues 333–356 (SKCN…ELQR) and 390–438 (IFES…KNKN). Residues Ser393 and Ser412 each carry the phosphoserine modification. The span at 397-412 (APKPPSYPSPVQPPQS) shows a compositional bias: pro residues. The segment covering 415-438 (FNNRYTNNNARFPPQTTYPPKNKN) has biased composition (polar residues). 2 positions are modified to phosphoserine: Ser525 and Ser528. The tract at residues 544–762 (SSFDEEETKQ…AKKQQTSAFT (219 aa)) is disordered. Residues 573 to 582 (HSRDASLSEM) are compositionally biased toward basic and acidic residues. Ser589, Ser590, and Ser593 each carry phosphoserine. Low complexity-rich tracts occupy residues 589–608 (SSIL…SPTK) and 621–638 (HSRS…QSYS). Phosphoserine is present on residues Ser644 and Ser655. Composition is skewed to polar residues over residues 645–662 (LVTS…SKSN) and 669–683 (ETPT…VSQP). A compositionally biased stretch (basic residues) spans 687-703 (KHKHKHKHKSKHKHKNS). Phosphoserine is present on Ser735. A compositionally biased stretch (polar residues) spans 737 to 746 (SELTQKSTKS). One can recognise a PH domain in the interval 776–895 (TADCSGWMSK…WLSAIIKATI (120 aa)). Thr919 bears the Phosphothreonine mark. A disordered region spans residues 930 to 980 (LRDAEEEEGRDQFGWDDTQNKRNSNYPIEQDQFETSDYLESSAFEYPGGRL). Residues 950–968 (KRNSNYPIEQDQFETSDYL) show a composition bias toward polar residues.

As to quaternary structure, interacts with BEM1.

Its subcellular location is the bud. It localises to the bud neck. Functionally, functions redundantly with BOI2 to promote the fusion of secretory vesicles with the plasma membrane at sites of polarized growth. The protein is BEM1-interacting protein 1 of Saccharomyces cerevisiae (strain ATCC 204508 / S288c) (Baker's yeast).